Consider the following 130-residue polypeptide: Small ribosomal subunit protein uS9 (130 aa).

This sequence belongs to the universal ribosomal protein uS9 family.

This Thiobacillus denitrificans (strain ATCC 25259 / T1) protein is Small ribosomal subunit protein uS9.